Here is a 402-residue protein sequence, read N- to C-terminus: Tryptophan--tRNA ligase, cytoplasmic (402 aa).

Positions 97 to 106 match the 'HIGH' region motif; sequence PSSEALHLGH. Residues 280–284 carry the 'KMSKS' region motif; sequence KMSAS.

The protein belongs to the class-I aminoacyl-tRNA synthetase family.

Its subcellular location is the cytoplasm. The protein localises to the cytosol. It carries out the reaction tRNA(Trp) + L-tryptophan + ATP = L-tryptophyl-tRNA(Trp) + AMP + diphosphate + H(+). The chain is Tryptophan--tRNA ligase, cytoplasmic from Arabidopsis thaliana (Mouse-ear cress).